We begin with the raw amino-acid sequence, 319 residues long: Mercury resistance probable Hg transport protein (319 aa).

Hg(2+) is bound by residues C298, C299, C318, and C319.

In Streptomyces lividans, this protein is Mercury resistance probable Hg transport protein.